Reading from the N-terminus, the 358-residue chain is DNA polymerase IV (358 aa).

The UmuC domain maps to 4–185 (IIHIDMDCYF…LSLRKIPGVG (182 aa)). Mg(2+) contacts are provided by D8 and D103. E104 is an active-site residue.

The protein belongs to the DNA polymerase type-Y family. Monomer. Mg(2+) serves as cofactor.

The protein localises to the cytoplasm. It carries out the reaction DNA(n) + a 2'-deoxyribonucleoside 5'-triphosphate = DNA(n+1) + diphosphate. In terms of biological role, poorly processive, error-prone DNA polymerase involved in untargeted mutagenesis. Copies undamaged DNA at stalled replication forks, which arise in vivo from mismatched or misaligned primer ends. These misaligned primers can be extended by PolIV. Exhibits no 3'-5' exonuclease (proofreading) activity. May be involved in translesional synthesis, in conjunction with the beta clamp from PolIII. The polypeptide is DNA polymerase IV (Shewanella baltica (strain OS185)).